Here is a 276-residue protein sequence, read N- to C-terminus: Putative phosphoenolpyruvate synthase regulatory protein (276 aa).

156 to 163 contacts ADP; sequence GVSRSGKT.

It belongs to the pyruvate, phosphate/water dikinase regulatory protein family. PSRP subfamily.

It catalyses the reaction [pyruvate, water dikinase] + ADP = [pyruvate, water dikinase]-phosphate + AMP + H(+). It carries out the reaction [pyruvate, water dikinase]-phosphate + phosphate + H(+) = [pyruvate, water dikinase] + diphosphate. Bifunctional serine/threonine kinase and phosphorylase involved in the regulation of the phosphoenolpyruvate synthase (PEPS) by catalyzing its phosphorylation/dephosphorylation. The polypeptide is Putative phosphoenolpyruvate synthase regulatory protein (Acidovorax ebreus (strain TPSY) (Diaphorobacter sp. (strain TPSY))).